We begin with the raw amino-acid sequence, 156 residues long: Insulin (156 aa).

The N-terminal stretch at 1–31 is a signal peptide; it reads MSKFLLQSHSANACLLTLLLTLASNLDISLA. 4 disulfides stabilise this stretch: C37-C114, C49-C119, C61-C128, and C112-C115. Positions 79 to 93 are cleaved as a propeptide — c peptide beta; it reads DTENVNDKLRGILLN. Residues 96–102 constitute a propeptide, c peptide alpha; that stretch reads EAFSYLT. Positions 141–156 are cleaved as a propeptide — d peptide; that stretch reads TGRSNSGHAQLEDNFS. The propeptide at 144–156 is d peptide short form; sequence SNSGHAQLEDNFS. E152 bears the 4-carboxyglutamate mark.

The protein belongs to the insulin family. In terms of assembly, heterodimer of a B chain or a B chain' and an A chain probably linked by three disulfide bonds. In terms of tissue distribution, expressed in the central region of the cerebral ganglia mostly within the F and C clusters.

It is found in the secreted. In terms of biological role, involved in glucose metabolism. In Aplysia californica (California sea hare), this protein is Insulin (PIN).